Consider the following 335-residue polypeptide: Tetraacyldisaccharide 4'-kinase (335 aa).

59–66 (TAGGNGKT) provides a ligand contact to ATP.

This sequence belongs to the LpxK family.

It carries out the reaction a lipid A disaccharide + ATP = a lipid IVA + ADP + H(+). The protein operates within glycolipid biosynthesis; lipid IV(A) biosynthesis; lipid IV(A) from (3R)-3-hydroxytetradecanoyl-[acyl-carrier-protein] and UDP-N-acetyl-alpha-D-glucosamine: step 6/6. In terms of biological role, transfers the gamma-phosphate of ATP to the 4'-position of a tetraacyldisaccharide 1-phosphate intermediate (termed DS-1-P) to form tetraacyldisaccharide 1,4'-bis-phosphate (lipid IVA). This is Tetraacyldisaccharide 4'-kinase from Vibrio vulnificus (strain YJ016).